The primary structure comprises 357 residues: Guanine nucleotide-binding protein alpha-2 subunit (357 aa).

Gly-2 carries the N-myristoyl glycine lipid modification. A lipid anchor (S-palmitoyl cysteine) is attached at Cys-4. The G-alpha domain occupies Asn-30 to Tyr-356. Residues Lys-33–Thr-46 are G1 motif. The GTP site is built by Glu-41, Ser-42, Gly-43, Lys-44, Ser-45, and Thr-46. Ser-45 serves as a coordination point for Mg(2+). Phosphoserine is present on Ser-113. The GTP site is built by Asp-154, Leu-179, Thr-185, Gly-207, Asn-272, Lys-273, Asp-275, and Ala-328. Residues Asp-177–Thr-185 are G2 motif. Residue Thr-185 participates in Mg(2+) binding. A G3 motif region spans residues Phe-200–Arg-209. The tract at residues Ile-268–Asp-275 is G4 motif. The G5 motif stretch occupies residues Thr-326–Thr-331.

This sequence belongs to the G-alpha family. In terms of assembly, g proteins are composed of 3 units; alpha, beta and gamma. The alpha chain contains the guanine nucleotide binding site. Interacts with the RAP guanine nucleotide exchange factor glfB. It depends on Mg(2+) as a cofactor. Post-translationally, ser-113 is transiently phosphorylated following stimulation with extracellular cAMP.

Guanine nucleotide-binding proteins (G proteins) are involved as modulators or transducers in various transmembrane signaling systems. G alpha-2 is required for the early aggregation process and most of the known cAMP receptor-mediated responses. Interacts with downstream effector gflB, a Rap guanine nucleotide exchange factor, to regulate the balance between Ras and Rap signaling at the leading edge of chemotaxing cells. This Dictyostelium discoideum (Social amoeba) protein is Guanine nucleotide-binding protein alpha-2 subunit (gpaB).